The following is an 852-amino-acid chain: Zinc finger protein 484 (852 aa).

The region spanning 8 to 78 is the KRAB domain; it reads VSFKDVTVDF…DGEIPSQSRP (71 aa). A Glycyl lysine isopeptide (Lys-Gly) (interchain with G-Cter in SUMO2) cross-link involves residue Lys-156. A C2H2-type 1; degenerate zinc finger spans residues 223 to 245; it reads CECNQCGKPLHHKQALIQQQKIH. The segment at 279 to 301 adopts a C2H2-type 2; degenerate zinc-finger fold; it reads HECHECEAVFTQKSQLDGSQRVY. A C2H2-type 3; degenerate zinc finger spans residues 328-350; sequence YKCSDYGRAFIQKSDLFRCQRIH. The C2H2-type 4; degenerate zinc-finger motif lies at 356–378; the sequence is YEYSECEKNLPQNSNLNIHKKIH. C2H2-type zinc fingers lie at residues 384–406, 412–434, 440–462, 468–490, 496–518, 524–546, 552–574, 580–602, 608–630, 636–658, 664–686, 692–714, 720–742, 748–770, and 776–798; these read FECT…QKIH, YVCT…ERIH, YECS…QRIH, FICS…QKIH, YICT…QKIH, YKCS…QKCH, YECS…QQIH, YRCA…QKIH, YKCS…QQSH, YICN…RRIH, YECS…HRIH, and YICA…QKIH. Lys-816 is covalently cross-linked (Glycyl lysine isopeptide (Lys-Gly) (interchain with G-Cter in SUMO2)).

This sequence belongs to the krueppel C2H2-type zinc-finger protein family.

The protein localises to the nucleus. In terms of biological role, may be involved in transcriptional regulation. This Homo sapiens (Human) protein is Zinc finger protein 484 (ZNF484).